Consider the following 196-residue polypeptide: MATMREPRFKLSRRLGVNIYGHPKAMKRFETTNTRKKKISDYGMHLIEKQKLKAYYGVLEKQFSRYVKAAMKNKEASGSSLLKILECRLDNVVYRIGFANSIRQARQMVSHGLILVNGKKLDIPSYEVQVGDVVSLKEKHRQNEMFSNNFMNLSTFNVPYIEKNPDEFSGKLLRLPNIDEIPIKVNEVAVIEFYSK.

An S4 RNA-binding domain is found at 87 to 149 (CRLDNVVYRI…HRQNEMFSNN (63 aa)).

Belongs to the universal ribosomal protein uS4 family. In terms of assembly, part of the 30S ribosomal subunit. Contacts protein S5. The interaction surface between S4 and S5 is involved in control of translational fidelity.

Functionally, one of the primary rRNA binding proteins, it binds directly to 16S rRNA where it nucleates assembly of the body of the 30S subunit. With S5 and S12 plays an important role in translational accuracy. The polypeptide is Small ribosomal subunit protein uS4C (rpsD3) (Clostridium acetobutylicum (strain ATCC 824 / DSM 792 / JCM 1419 / IAM 19013 / LMG 5710 / NBRC 13948 / NRRL B-527 / VKM B-1787 / 2291 / W)).